Reading from the N-terminus, the 315-residue chain is tRNA-cytidine(32) 2-sulfurtransferase (315 aa).

Residues S39–S44 carry the PP-loop motif motif. [4Fe-4S] cluster-binding residues include C114, C117, and C205.

The protein belongs to the TtcA family. As to quaternary structure, homodimer. Mg(2+) is required as a cofactor. The cofactor is [4Fe-4S] cluster.

The protein localises to the cytoplasm. It catalyses the reaction cytidine(32) in tRNA + S-sulfanyl-L-cysteinyl-[cysteine desulfurase] + AH2 + ATP = 2-thiocytidine(32) in tRNA + L-cysteinyl-[cysteine desulfurase] + A + AMP + diphosphate + H(+). Its pathway is tRNA modification. Catalyzes the ATP-dependent 2-thiolation of cytidine in position 32 of tRNA, to form 2-thiocytidine (s(2)C32). The sulfur atoms are provided by the cysteine/cysteine desulfurase (IscS) system. This is tRNA-cytidine(32) 2-sulfurtransferase from Ralstonia pickettii (strain 12J).